Reading from the N-terminus, the 782-residue chain is Zinc finger Y-chromosomal protein 1 (782 aa).

2 disordered regions span residues 211–233 (ADLEGSSEVTMNAESGTDSSKLD) and 360–386 (LNQDESGGLDRVPKQKSKKKKRPESKQ). A compositionally biased stretch (polar residues) spans 217–229 (SEVTMNAESGTDS). Residues 372 to 382 (PKQKSKKKKRP) carry the Nuclear localization signal motif. The segment covering 373-382 (KQKSKKKKRP) has biased composition (basic residues). C2H2-type zinc fingers lie at residues 403-425 (YPCMFCGKKFKTKRFLKRHTKNH), 434-456 (YHCTECDYSTNKKISLHNHMESH), 466-488 (TECDDCRKNLSHAGTLCTHKTMH), 497-520 (CKCKFCDYETAEQTLLNHHLLVVH), 526-548 (HICGECGKGFRHPSALKKHIRVH), 554-577 (YECQYCEYKSADSSNLKTHIKSKH), 583-605 (LKCGICLLTFSDNKEAQQHAVLH), 611-634 (HQCSHCNHKSSNSSDLKRHIISVH), 640-662 (HKCDMCSKGFHRPSELKKHVATH), 668-691 (HQCRHCDFNSPDPFLLSHHILSAH), 697-719 (FKCKRCKKEFQQQCELQTHMKTH), 725-748 (YQCEYCEYSTKDASGFKRHVISIH), and 754-777 (HSCDFCKKGFRRPSEKNQHIMRHH).

This sequence belongs to the krueppel C2H2-type zinc-finger protein family. ZFX/ZFY subfamily.

It is found in the nucleus. In terms of biological role, probable transcriptional activator. Binds to the consensus sequence 5'-AGGCCY-3'. This chain is Zinc finger Y-chromosomal protein 1 (Zfy1), found in Mus musculus (Mouse).